Consider the following 261-residue polypeptide: tRNA (guanine-N(7)-)-methyltransferase (261 aa).

S-adenosyl-L-methionine-binding residues include Glu-75, Glu-100, Asp-127, and Asp-150. Asp-150 is an active-site residue. Residue Lys-154 coordinates substrate. The segment at 156–161 is interaction with RNA; it reads RHNKRR. Substrate-binding positions include Asp-186 and 223–226; that span reads THFE.

This sequence belongs to the class I-like SAM-binding methyltransferase superfamily. TrmB family.

It catalyses the reaction guanosine(46) in tRNA + S-adenosyl-L-methionine = N(7)-methylguanosine(46) in tRNA + S-adenosyl-L-homocysteine. The protein operates within tRNA modification; N(7)-methylguanine-tRNA biosynthesis. Functionally, catalyzes the formation of N(7)-methylguanine at position 46 (m7G46) in tRNA. This Xanthomonas axonopodis pv. citri (strain 306) protein is tRNA (guanine-N(7)-)-methyltransferase.